The sequence spans 215 residues: Small ribosomal subunit protein eS1 (215 aa).

Belongs to the eukaryotic ribosomal protein eS1 family.

This is Small ribosomal subunit protein eS1 from Halorubrum lacusprofundi (strain ATCC 49239 / DSM 5036 / JCM 8891 / ACAM 34).